We begin with the raw amino-acid sequence, 216 residues long: Capsule polysaccharide export ATP-binding protein CtrD (216 aa).

Residues 2 to 215 (ISVEHVSKRY…DKAYEYYNSL (214 aa)) enclose the ABC transporter domain. An ATP-binding site is contributed by 38 to 45 (GRNGAGKS).

The protein belongs to the ABC transporter superfamily.

Its subcellular location is the cell inner membrane. The catalysed reaction is ATP + H2O + capsular polysaccharide-[capsular polysaccharide-binding protein]Side 1 = ADP + phosphate + capsular polysaccharideSide 2 + [capsular polysaccharide-binding protein]Side 1.. Its function is as follows. Putative ATP-binding protein, and an energy-coupling component of capsule polysaccharide export apparatus. This is Capsule polysaccharide export ATP-binding protein CtrD (ctrD) from Neisseria meningitidis serogroup B (strain ATCC BAA-335 / MC58).